We begin with the raw amino-acid sequence, 314 residues long: Probable cell division protein WhiA (314 aa).

The H-T-H motif DNA-binding region spans 274-308 (SLKELGEMVSTGPISKSGMNHRLRKLNELADKIRN).

Belongs to the WhiA family.

In terms of biological role, involved in cell division and chromosome segregation. The protein is Probable cell division protein WhiA of Staphylococcus epidermidis (strain ATCC 35984 / DSM 28319 / BCRC 17069 / CCUG 31568 / BM 3577 / RP62A).